A 215-amino-acid polypeptide reads, in one-letter code: Cytochrome b6 (215 aa).

Residues 32–52 (IFYCLGGVTLVCFIIQFATGF) traverse the membrane as a helical segment. C35 is a heme c binding site. Residues H86 and H100 each coordinate heme b. The next 3 helical transmembrane spans lie at 90-110 (ASMM…TGGF), 116-136 (LTWI…VTGY), and 186-206 (LHTF…FLMI). Positions 187 and 202 each coordinate heme b.

It belongs to the cytochrome b family. PetB subfamily. The 4 large subunits of the cytochrome b6-f complex are cytochrome b6, subunit IV (17 kDa polypeptide, PetD), cytochrome f and the Rieske protein, while the 4 small subunits are PetG, PetL, PetM and PetN. The complex functions as a dimer. Requires heme b as cofactor. Heme c serves as cofactor.

The protein localises to the cellular thylakoid membrane. Its function is as follows. Component of the cytochrome b6-f complex, which mediates electron transfer between photosystem II (PSII) and photosystem I (PSI), cyclic electron flow around PSI, and state transitions. This chain is Cytochrome b6, found in Acaryochloris marina (strain MBIC 11017).